The sequence spans 217 residues: Probable transaldolase (217 aa).

K83 (schiff-base intermediate with substrate) is an active-site residue.

The protein belongs to the transaldolase family. Type 3B subfamily.

The protein localises to the cytoplasm. It carries out the reaction D-sedoheptulose 7-phosphate + D-glyceraldehyde 3-phosphate = D-erythrose 4-phosphate + beta-D-fructose 6-phosphate. The protein operates within carbohydrate degradation; pentose phosphate pathway; D-glyceraldehyde 3-phosphate and beta-D-fructose 6-phosphate from D-ribose 5-phosphate and D-xylulose 5-phosphate (non-oxidative stage): step 2/3. Functionally, transaldolase is important for the balance of metabolites in the pentose-phosphate pathway. In Jannaschia sp. (strain CCS1), this protein is Probable transaldolase.